Reading from the N-terminus, the 308-residue chain is Zinc finger CCCH domain-containing protein 15 (308 aa).

A disordered region spans residues Met-1–Gly-21. The segment covering Ser-9 to Gly-21 has biased composition (low complexity). Residues Thr-56–Arg-91 adopt a coiled-coil conformation. The segment at Leu-110–Gly-190 is disordered. Ser-111 is subject to Phosphoserine. The segment covering Arg-148–Lys-164 has biased composition (polar residues). 2 C3H1-type zinc fingers span residues Met-222–Lys-250 and Arg-260–Ser-288.

Post-translationally, phosphorylated at Ser-111 by ASK7/BIN2 in the cytoplasm in the absence of brassinosteroids (BRs). As to expression, highly expressed in secondary cell wall-forming tissues and the xylem cells of roots. Expressed predominantly in inflorescence stems, flowers and siliques. Highly expressed in the basal portion of stems, where cells are undergoing secondary cell wall thickening. Highly expressed in meiocytes and tapetum from anthers.

Its subcellular location is the cytoplasm. The protein localises to the nucleus. Functionally, functions probably as a transcriptional factor that activates genes involved in secondary cell wall biosynthesis. Functions redudantly with C3H14 to regulate secondary cell wall formation. C3H14 and C3H15 have overlapping roles in the regulation of secondary cell wall formation and anther development. C3H14 may contribute more to secondary cell wall thickening while C3H15 could be more important in anther development. May regulate at both the transcriptional and post-transcriptional levels the expression of many genes involved in various biological processes, particularly those associated with cell wall metabolism and pollen development. Involved in the regulation of callose metabolism in male meiocytes, in integrity of newly formed microspores, and promotes male fertility. May be involved in the regulation of the callose synthesis genes CALS5 and CALS12, the potential degradation of callose walls-related genes A6 and MYB80, as well as other putative beta-1,3-glucanase genes. Negatively regulates cell elongation by inhibiting brassinosteroid (BR) signaling. Functions downstream of the BRI1 receptor as a negative regulator in the BR pathway. The polypeptide is Zinc finger CCCH domain-containing protein 15 (Arabidopsis thaliana (Mouse-ear cress)).